The sequence spans 545 residues: CTP synthase (545 aa).

Positions 1 to 266 (MTTNYIFVTG…DDYICKRFSL (266 aa)) are amidoligase domain. Position 14 (Ser14) interacts with CTP. Position 14 (Ser14) interacts with UTP. ATP contacts are provided by residues 15-20 (SLGKGI) and Asp72. Residues Asp72 and Glu140 each coordinate Mg(2+). Residues 147–149 (DIE), 187–192 (KTKPTQ), and Lys223 each bind CTP. UTP is bound by residues 187–192 (KTKPTQ) and Lys223. An ATP-binding site is contributed by 239-241 (KDV). The Glutamine amidotransferase type-1 domain occupies 291–542 (TIGMVGKYIE…VKAASEYQKR (252 aa)). Residue Gly352 coordinates L-glutamine. Cys379 (nucleophile; for glutamine hydrolysis) is an active-site residue. Residues 380–383 (LGMQ), Glu403, and Arg470 contribute to the L-glutamine site. Active-site residues include His515 and Glu517.

This sequence belongs to the CTP synthase family. In terms of assembly, homotetramer.

It catalyses the reaction UTP + L-glutamine + ATP + H2O = CTP + L-glutamate + ADP + phosphate + 2 H(+). The catalysed reaction is L-glutamine + H2O = L-glutamate + NH4(+). The enzyme catalyses UTP + NH4(+) + ATP = CTP + ADP + phosphate + 2 H(+). The protein operates within pyrimidine metabolism; CTP biosynthesis via de novo pathway; CTP from UDP: step 2/2. With respect to regulation, allosterically activated by GTP, when glutamine is the substrate; GTP has no effect on the reaction when ammonia is the substrate. The allosteric effector GTP functions by stabilizing the protein conformation that binds the tetrahedral intermediate(s) formed during glutamine hydrolysis. Inhibited by the product CTP, via allosteric rather than competitive inhibition. Catalyzes the ATP-dependent amination of UTP to CTP with either L-glutamine or ammonia as the source of nitrogen. Regulates intracellular CTP levels through interactions with the four ribonucleotide triphosphates. In Klebsiella pneumoniae subsp. pneumoniae (strain ATCC 700721 / MGH 78578), this protein is CTP synthase.